The chain runs to 131 residues: MASLKEIIDELGKQAKEQNKIASRILKIKGIKRIVVQLNAVPQDGKIRYSLTIHSQNNFRKQIGITPQDAEDLKLIAEFLEKYSDFLNEYVKFTPRNNNAIQEEEIDMEQQEEKEEKPREKGKKKSVEEEF.

The interval 99-131 is disordered; sequence NAIQEEEIDMEQQEEKEEKPREKGKKKSVEEEF. Acidic residues predominate over residues 102–113; that stretch reads QEEEIDMEQQEE. The span at 114–131 shows a compositional bias: basic and acidic residues; the sequence is KEEKPREKGKKKSVEEEF.

This is an uncharacterized protein from Sulfolobus islandicus rod-shaped virus 1 (SIRV-1).